The chain runs to 432 residues: Adenylosuccinate synthetase (432 aa).

Residues 13–19 (GDEGKGK) and 41–43 (GHT) contribute to the GTP site. The Proton acceptor role is filled by D14. The Mg(2+) site is built by D14 and G41. Residues 14 to 17 (DEGK), 39 to 42 (NAGH), T130, R144, Q225, T240, and R304 each bind IMP. H42 functions as the Proton donor in the catalytic mechanism. 300–306 (AVTGRPR) lines the substrate pocket. GTP is bound by residues R306, 332–334 (KLD), and 415–417 (STG).

This sequence belongs to the adenylosuccinate synthetase family. In terms of assembly, homodimer. It depends on Mg(2+) as a cofactor.

It localises to the cytoplasm. The catalysed reaction is IMP + L-aspartate + GTP = N(6)-(1,2-dicarboxyethyl)-AMP + GDP + phosphate + 2 H(+). Its pathway is purine metabolism; AMP biosynthesis via de novo pathway; AMP from IMP: step 1/2. Its function is as follows. Plays an important role in the de novo pathway of purine nucleotide biosynthesis. Catalyzes the first committed step in the biosynthesis of AMP from IMP. The polypeptide is Adenylosuccinate synthetase (Actinobacillus succinogenes (strain ATCC 55618 / DSM 22257 / CCUG 43843 / 130Z)).